A 544-amino-acid chain; its full sequence is GMP synthase [glutamine-hydrolyzing] (544 aa).

One can recognise a Glutamine amidotransferase type-1 domain in the interval 12–210 (TILILDFGSQ…VKNVCGVRDG (199 aa)). Catalysis depends on Cys-88, which acts as the Nucleophile. Residues His-184 and Glu-186 contribute to the active site. Residues 211 to 419 (WSMESFIPKE…LNIPEHLVGR (209 aa)) form the GMPS ATP-PPase domain. 239-245 (SGGVDST) lines the ATP pocket. XMP contacts are provided by Arg-312, Asp-481, Lys-536, and Glu-542.

As to quaternary structure, homodimer. Also forms a small population of homotetramers. Mg(2+) serves as cofactor.

The protein resides in the cytoplasm. It is found in the cytosol. The enzyme catalyses XMP + L-glutamine + ATP + H2O = GMP + L-glutamate + AMP + diphosphate + 2 H(+). It participates in purine metabolism; GMP biosynthesis; GMP from XMP (L-Gln route): step 1/1. Its activity is regulated as follows. The enzyme is inhibited by ECC1385; although this compound fails to inhibit growth of the organism. Its function is as follows. Catalyzes the conversion of xanthine monophosphate (XMP) to GMP in the presence of glutamine and ATP through an adenyl-XMP intermediate. This Cryptococcus neoformans var. grubii serotype A (strain H99 / ATCC 208821 / CBS 10515 / FGSC 9487) (Filobasidiella neoformans var. grubii) protein is GMP synthase [glutamine-hydrolyzing].